Reading from the N-terminus, the 1350-residue chain is ABC transporter G family member 45 (1350 aa).

Positions Met-1–Pro-23 are disordered. Positions Ala-85–Ser-357 constitute an ABC transporter 1 domain. Position 118-125 (Gly-118–Thr-125) interacts with ATP. An ABC transmembrane type-2 1 domain is found at Asn-434–Phe-647. A run of 6 helical transmembrane segments spans residues Val-453–Leu-473, Ala-491–Ile-511, Ile-523–Ser-543, Val-557–Met-577, Met-597–Ile-617, and Ile-683–Leu-703. Residues Leu-749 to Pro-1001 form the ABC transporter 2 domain. Gly-794–Thr-801 is an ATP binding site. In terms of domain architecture, ABC transmembrane type-2 2 spans Ala-1074–Leu-1288. Transmembrane regions (helical) follow at residues Ile-1099–Ile-1119, Phe-1126–Ile-1146, Leu-1181–Phe-1201, Phe-1208–Met-1228, Ile-1238–Ile-1258, Trp-1269–Gly-1289, and Leu-1322–Ile-1342.

It belongs to the ABC transporter superfamily. ABCG family. PDR (TC 3.A.1.205) subfamily.

Its subcellular location is the membrane. In terms of biological role, may be a general defense protein. The protein is ABC transporter G family member 45 of Oryza sativa subsp. japonica (Rice).